An 82-amino-acid polypeptide reads, in one-letter code: Putative membrane protein insertion efficiency factor (82 aa).

This sequence belongs to the UPF0161 family.

Its subcellular location is the cell inner membrane. In terms of biological role, could be involved in insertion of integral membrane proteins into the membrane. The polypeptide is Putative membrane protein insertion efficiency factor (Rickettsia africae (strain ESF-5)).